Consider the following 425-residue polypeptide: Histidinol dehydrogenase (425 aa).

The NAD(+) site is built by Tyr-124, Gln-184, and Asn-207. Residues Ser-230, Gln-252, and His-255 each coordinate substrate. Residues Gln-252 and His-255 each coordinate Zn(2+). Catalysis depends on proton acceptor residues Glu-321 and His-322. Substrate contacts are provided by His-322, Asp-355, Glu-409, and His-414. Residue Asp-355 participates in Zn(2+) binding. His-414 contacts Zn(2+).

Belongs to the histidinol dehydrogenase family. The cofactor is Zn(2+).

It catalyses the reaction L-histidinol + 2 NAD(+) + H2O = L-histidine + 2 NADH + 3 H(+). It functions in the pathway amino-acid biosynthesis; L-histidine biosynthesis; L-histidine from 5-phospho-alpha-D-ribose 1-diphosphate: step 9/9. Functionally, catalyzes the sequential NAD-dependent oxidations of L-histidinol to L-histidinaldehyde and then to L-histidine. The protein is Histidinol dehydrogenase of Halobacterium salinarum (strain ATCC 700922 / JCM 11081 / NRC-1) (Halobacterium halobium).